A 408-amino-acid polypeptide reads, in one-letter code: S-adenosylmethionine synthase (408 aa).

142 to 147 (GEGSGD) contributes to the ATP binding site.

Belongs to the AdoMet synthase 2 family. Requires Mg(2+) as cofactor.

The enzyme catalyses L-methionine + ATP + H2O = S-adenosyl-L-methionine + phosphate + diphosphate. It functions in the pathway amino-acid biosynthesis; S-adenosyl-L-methionine biosynthesis; S-adenosyl-L-methionine from L-methionine: step 1/1. Its function is as follows. Catalyzes the formation of S-adenosylmethionine from methionine and ATP. This Halobacterium salinarum (strain ATCC 29341 / DSM 671 / R1) protein is S-adenosylmethionine synthase.